The following is a 140-amino-acid chain: MTKRQNRMVLVALLVIGVSLAGYLGLKAFNENLLYFLSPTDVTKGRAPKDKDFRLGGMIVKDSIKHDGIKVVFDVTDYSNTFRVNYSGILPDLFKEGQGVITTGSLVDGVFMATEVLAKHDENYMPPEVADALEKAKNKQ.

Residues 1-7 are Cytoplasmic-facing; sequence MTKRQNR. Residues 8-28 traverse the membrane as a helical; Signal-anchor for type II membrane protein segment; it reads MVLVALLVIGVSLAGYLGLKA. Residues 29-140 are Periplasmic-facing; sequence FNENLLYFLS…DALEKAKNKQ (112 aa). Heme is bound by residues His120 and Tyr124.

It belongs to the CcmE/CycJ family.

Its subcellular location is the cell inner membrane. Heme chaperone required for the biogenesis of c-type cytochromes. Transiently binds heme delivered by CcmC and transfers the heme to apo-cytochromes in a process facilitated by CcmF and CcmH. This Vesicomyosocius okutanii subsp. Calyptogena okutanii (strain HA) protein is Cytochrome c-type biogenesis protein CcmE.